Consider the following 193-residue polypeptide: Pyridoxal 5'-phosphate synthase subunit PdxT (193 aa).

Residue G50–S52 coordinates L-glutamine. The active-site Nucleophile is C82. L-glutamine is bound by residues R109 and I136–R137. Residues H172 and E174 each act as charge relay system in the active site.

The protein belongs to the glutaminase PdxT/SNO family. As to quaternary structure, in the presence of PdxS, forms a dodecamer of heterodimers. Only shows activity in the heterodimer.

It catalyses the reaction aldehydo-D-ribose 5-phosphate + D-glyceraldehyde 3-phosphate + L-glutamine = pyridoxal 5'-phosphate + L-glutamate + phosphate + 3 H2O + H(+). The catalysed reaction is L-glutamine + H2O = L-glutamate + NH4(+). The protein operates within cofactor biosynthesis; pyridoxal 5'-phosphate biosynthesis. Its function is as follows. Catalyzes the hydrolysis of glutamine to glutamate and ammonia as part of the biosynthesis of pyridoxal 5'-phosphate. The resulting ammonia molecule is channeled to the active site of PdxS. The sequence is that of Pyridoxal 5'-phosphate synthase subunit PdxT from Streptococcus pneumoniae serotype 19F (strain G54).